Consider the following 154-residue polypeptide: Egg-lysin (154 aa).

Positions 1–18 (MKLLVLCIFAMMATLAMS) are cleaved as a signal peptide.

In terms of assembly, homodimer. As to expression, sperm.

Dissolves the egg vitelline layer nonenzymatically during fertilization. It creates a hole of about 3 mu-m in diameter through which the sperm pass. This is Egg-lysin from Haliotis walallensis (Flat abalone).